Consider the following 159-residue polypeptide: MSMRIGQGYDVHAFGEGEKIVIGGVVIPHHHGLVAHSDGDVLLHALCDALLGAVALGDIGKHFPDTDMQYRNADSRSLLRMVYAKVSQHGWKLANADMTIVAQAPRMASYIPHMVEVIASDLQSSASQINVKATTSERLGFTGREEGIACYAVVLLESR.

The a divalent metal cation site is built by Asp10 and His12. 4-CDP-2-C-methyl-D-erythritol 2-phosphate is bound by residues 10-12 (DVH) and 36-37 (HS). Residue His44 coordinates a divalent metal cation. Residues 58-60 (DIG), 63-67 (FPDTD), 102-108 (AQAPRMA), 134-137 (TTSE), Phe141, and Arg144 contribute to the 4-CDP-2-C-methyl-D-erythritol 2-phosphate site.

The protein belongs to the IspF family. In terms of assembly, homotrimer. The cofactor is a divalent metal cation.

The catalysed reaction is 4-CDP-2-C-methyl-D-erythritol 2-phosphate = 2-C-methyl-D-erythritol 2,4-cyclic diphosphate + CMP. It participates in isoprenoid biosynthesis; isopentenyl diphosphate biosynthesis via DXP pathway; isopentenyl diphosphate from 1-deoxy-D-xylulose 5-phosphate: step 4/6. In terms of biological role, involved in the biosynthesis of isopentenyl diphosphate (IPP) and dimethylallyl diphosphate (DMAPP), two major building blocks of isoprenoid compounds. Catalyzes the conversion of 4-diphosphocytidyl-2-C-methyl-D-erythritol 2-phosphate (CDP-ME2P) to 2-C-methyl-D-erythritol 2,4-cyclodiphosphate (ME-CPP) with a corresponding release of cytidine 5-monophosphate (CMP). The sequence is that of 2-C-methyl-D-erythritol 2,4-cyclodiphosphate synthase from Cellvibrio japonicus (strain Ueda107) (Pseudomonas fluorescens subsp. cellulosa).